A 415-amino-acid polypeptide reads, in one-letter code: Dynein assembly factor with WD repeat domains 1 (415 aa).

WD repeat units follow at residues 90-129 (AHIL…ELHT), 132-172 (GHRN…CFYT), 175-214 (GHTA…EVST), 217-256 (GHFA…KVHV), 259-298 (GHRG…CLAT), 301-340 (GHND…CLCQ), 343-384 (GHKG…QVLE), and 385-415 (GHSD…RIWH).

It belongs to the WD repeat WDR69 family. In terms of tissue distribution, expressed in organs bearing motile cilia, including the pronephros, otic vesicles and Kupffer's vesicle.

The protein localises to the cytoplasm. The protein resides in the cytoskeleton. Its subcellular location is the flagellum basal body. It localises to the flagellum axoneme. Its function is as follows. Required for axonemal dynein assembly and ciliary motility in ciliated organs, including Kupffer's vesicle, during embryogenesis. Facilitates the onset of robust cilia motility during development. The sequence is that of Dynein assembly factor with WD repeat domains 1 (daw1) from Danio rerio (Zebrafish).